The following is a 1043-amino-acid chain: MEHEVGMDADISDFTLGADGYVRIWSTEAIYNTGNPEYANKPKQLASMSNHSGTIHTVRFSPNGKYLASGADDKIVCIYTLDANPPSHASTFGSNEAPPVENWRTIRRLIGHDNDVQDLGWSYDSSILVSVGLDSKVVVWSGHTFEKLKTLSIHQSHVKGITFDPANKYFATASDDRTVRIFRFTSPSPNSTAHDQMNNFVLEHTISAPFQNSPLTAYFRRCSWSPDGMHIAAANAVNGPVSSVAIINRGSWDGDINLIGHEAPVEVCAFSPRLYSSQPVSKSAVDNQNHAMQNVTVIACAGGDKSLSIWITSNPRPIVVAQEMAAKSISDLAWSPDGKCLFATALDGTILAVRFEDGELGYPMAMEENEKSLTKFGTNRRGAGIAETTDGLLLEEKSKAGEIKDVEGRMGALMGDGHATAESMVNGKTAPLPSNGATPARGPSPAADTQKAQPNGTAATPAAPEPEKPDPYQAKLERLKQRPTYTKDGKKRIAPLLVSGAGAAESSLPQARLMASVSSQVKADVPQSIVDLSKPFDGLPKGGLSALLFGNKRKLAQLEGDEDGHVEKRVALASQNGATPILANTPDGLLPAQPQPAPTGQQPTPEFIRPAVTNPCMAISQLRLAVPKVRSQIVRAIDSNGRPTEPPSATGEPGKSRADVVFEARNPSPASLTGRAVDREPVRLTLFRGEQPLWQDFLPRTVLLVTGNQSMWSAACEDGSVYIWSPAGRRLVSALVLEAQPVILECNGPWILCISAVGMCYVWNVKHLSSPHPPISLQPVLDAAIHTLGAHPSAAPAITNARINSEGRVVVALSNGEGYSYSPSMYTWQRVSEAWWAVGSQYWNSTEAPVGNLQSAGPQQDKETTAAVSAGIIPFLERNTTNETLLRGRAYFLQRLIKVLLSREGYESFESSVSIAHMENRLAAALSLGAKEEFRLYLSMYAKRLGAEGLKMKVEELLKGLIGGLFEEEDETGTGRRLQANEKEDRNWQESSDTLCGWPREVLLKEVILALGKHRDLQRVTVPYAKLLGVVDNESEDNDAMET.

7 WD repeats span residues 1–35 (MEHE…NTGN), 50–89 (NHSG…PSHA), 111–150 (GHDN…KLKT), 153–192 (IHQS…PNST), 214–257 (PLTA…GDIN), 260–320 (GHEA…PIVV), and 324–365 (MAAK…YPMA). The tract at residues 424–472 (MVNGKTAPLPSNGATPARGPSPAADTQKAQPNGTAATPAAPEPEKPDPY) is disordered.

It belongs to the WD repeat HIR1 family.

It is found in the nucleus. Functionally, required for replication-independent chromatin assembly and for the periodic repression of histone gene transcription during the cell cycle. The polypeptide is Protein hir1 (hir1) (Aspergillus fumigatus (strain ATCC MYA-4609 / CBS 101355 / FGSC A1100 / Af293) (Neosartorya fumigata)).